Reading from the N-terminus, the 466-residue chain is Ornithine decarboxylase (466 aa).

Lys116 carries the post-translational modification N6-(pyridoxal phosphate)lysine. Residues Ser247, Gly286, and Glu318–Arg321 each bind pyridoxal 5'-phosphate. Residue Phe362–Asp363 coordinates substrate. The active-site Proton donor; shared with dimeric partner is Cys411. Asp412 provides a ligand contact to substrate. Tyr441 lines the pyridoxal 5'-phosphate pocket.

This sequence belongs to the Orn/Lys/Arg decarboxylase class-II family. As to quaternary structure, homodimer. Only the dimer is catalytically active, as the active sites are constructed of residues from both monomers. The cofactor is pyridoxal 5'-phosphate.

Its subcellular location is the cytoplasm. The enzyme catalyses L-ornithine + H(+) = putrescine + CO2. Its pathway is amine and polyamine biosynthesis; putrescine biosynthesis via L-ornithine pathway; putrescine from L-ornithine: step 1/1. With respect to regulation, inhibited by antizyme (AZ) OAZ1 in response to polyamine levels. AZ inhibits the assembly of the functional homodimer by binding to ODC monomers and targeting them for ubiquitin-independent proteolytic destruction by the 26S proteasome. In terms of biological role, catalyzes the first and rate-limiting step of polyamine biosynthesis that converts ornithine into putrescine, which is the precursor for the polyamines, spermidine and spermine. Polyamines are essential for cell proliferation and are implicated in cellular processes, ranging from DNA replication to apoptosis. This Saccharomyces cerevisiae (strain ATCC 204508 / S288c) (Baker's yeast) protein is Ornithine decarboxylase.